Reading from the N-terminus, the 123-residue chain is MPTINQLIRIGRENKRDKSTAPALKCCPQKRGVCTRVYTTTPKKPNSALRKVARVRLTNGIEVTSYIPGVGHNLQEHSVVLIRGGRVKDLPGVRYHIVRGTLDSVGVKDRKKSRSKYGAKRPK.

3-methylthioaspartic acid is present on Asp-89. The interval 104-123 (SVGVKDRKKSRSKYGAKRPK) is disordered. Basic residues predominate over residues 109–123 (DRKKSRSKYGAKRPK).

Belongs to the universal ribosomal protein uS12 family. Part of the 30S ribosomal subunit. Contacts proteins S8 and S17. May interact with IF1 in the 30S initiation complex.

With S4 and S5 plays an important role in translational accuracy. In terms of biological role, interacts with and stabilizes bases of the 16S rRNA that are involved in tRNA selection in the A site and with the mRNA backbone. Located at the interface of the 30S and 50S subunits, it traverses the body of the 30S subunit contacting proteins on the other side and probably holding the rRNA structure together. The combined cluster of proteins S8, S12 and S17 appears to hold together the shoulder and platform of the 30S subunit. This Pelobacter propionicus (strain DSM 2379 / NBRC 103807 / OttBd1) protein is Small ribosomal subunit protein uS12.